A 179-amino-acid chain; its full sequence is ATP synthase subunit delta (179 aa).

Belongs to the ATPase delta chain family. As to quaternary structure, F-type ATPases have 2 components, F(1) - the catalytic core - and F(0) - the membrane proton channel. F(1) has five subunits: alpha(3), beta(3), gamma(1), delta(1), epsilon(1). F(0) has three main subunits: a(1), b(2) and c(10-14). The alpha and beta chains form an alternating ring which encloses part of the gamma chain. F(1) is attached to F(0) by a central stalk formed by the gamma and epsilon chains, while a peripheral stalk is formed by the delta and b chains.

It is found in the cell inner membrane. In terms of biological role, f(1)F(0) ATP synthase produces ATP from ADP in the presence of a proton or sodium gradient. F-type ATPases consist of two structural domains, F(1) containing the extramembraneous catalytic core and F(0) containing the membrane proton channel, linked together by a central stalk and a peripheral stalk. During catalysis, ATP synthesis in the catalytic domain of F(1) is coupled via a rotary mechanism of the central stalk subunits to proton translocation. This protein is part of the stalk that links CF(0) to CF(1). It either transmits conformational changes from CF(0) to CF(1) or is implicated in proton conduction. The protein is ATP synthase subunit delta of Anaeromyxobacter dehalogenans (strain 2CP-C).